The sequence spans 99 residues: Acylphosphatase (99 aa).

An Acylphosphatase-like domain is found at 5–97 (VRQVMIRGRV…RPGERFSQLP (93 aa)). Active-site residues include R20 and N38.

The protein belongs to the acylphosphatase family.

The catalysed reaction is an acyl phosphate + H2O = a carboxylate + phosphate + H(+). In Nitrobacter winogradskyi (strain ATCC 25391 / DSM 10237 / CIP 104748 / NCIMB 11846 / Nb-255), this protein is Acylphosphatase (acyP).